The following is a 510-amino-acid chain: NAD(P)H-quinone oxidoreductase subunit 2 B, chloroplastic (510 aa).

13 consecutive transmembrane segments (helical) span residues 24-44 (LLLFDGSLIVPECILIFGLIL), 57-77 (IPWLYFISSTSLVMSITALLF), 99-119 (IFQFLILLCSTLCIPLSVEYI), 124-144 (MAITEFLLFVLTATLGGMFLC), 149-169 (LITIFVAPECFSLCSYLLSGY), 183-203 (YLLMGGASSSILVHGFSWLYG), 227-247 (PGISIALIFITVGIGFKLSPA), 295-315 (WHLLLETLAILSMILGNLIAI), 323-343 (MLAYSSIGQIGYVIIGIIVGD), 354-374 (YMLFYISMNLGTFACIVLFGL), 395-415 (ALSLALCLLSLGGLPPLAGFF), 418-438 (LYLFWCGWQAGLYFLVLIGLL), and 484-504 (MIVCVIASTIPGISMNPIIAI).

It belongs to the complex I subunit 2 family. In terms of assembly, NDH is composed of at least 16 different subunits, 5 of which are encoded in the nucleus.

It is found in the plastid. Its subcellular location is the chloroplast thylakoid membrane. The catalysed reaction is a plastoquinone + NADH + (n+1) H(+)(in) = a plastoquinol + NAD(+) + n H(+)(out). It carries out the reaction a plastoquinone + NADPH + (n+1) H(+)(in) = a plastoquinol + NADP(+) + n H(+)(out). Functionally, NDH shuttles electrons from NAD(P)H:plastoquinone, via FMN and iron-sulfur (Fe-S) centers, to quinones in the photosynthetic chain and possibly in a chloroplast respiratory chain. The immediate electron acceptor for the enzyme in this species is believed to be plastoquinone. Couples the redox reaction to proton translocation, and thus conserves the redox energy in a proton gradient. The sequence is that of NAD(P)H-quinone oxidoreductase subunit 2 B, chloroplastic from Daucus carota (Wild carrot).